Here is a 228-residue protein sequence, read N- to C-terminus: Uracil-DNA glycosylase (228 aa).

Asp64 functions as the Proton acceptor in the catalytic mechanism.

This sequence belongs to the uracil-DNA glycosylase (UDG) superfamily. UNG family.

The protein resides in the cytoplasm. It carries out the reaction Hydrolyzes single-stranded DNA or mismatched double-stranded DNA and polynucleotides, releasing free uracil.. In terms of biological role, excises uracil residues from the DNA which can arise as a result of misincorporation of dUMP residues by DNA polymerase or due to deamination of cytosine. The chain is Uracil-DNA glycosylase from Yersinia pestis bv. Antiqua (strain Antiqua).